The chain runs to 85 residues: Toxin BmKAEP (85 aa).

The first 21 residues, 1–21 (MKLFLLLVISASMLIDGLVNA), serve as a signal peptide directing secretion. Positions 22–82 (DGYIRGSNGC…TWKSESNTCG (61 aa)) constitute an LCN-type CS-alpha/beta domain. 4 cysteine pairs are disulfide-bonded: Cys-31-Cys-81, Cys-35-Cys-56, Cys-42-Cys-63, and Cys-46-Cys-65. Gly-82 is subject to Glycine amide.

In terms of tissue distribution, expressed by the venom gland.

The protein localises to the secreted. In terms of biological role, shows anti-epileptic activity. Shares high homology with depressant insect toxins, but shows very weak toxicity against mammals and insects and no obvious symptoms on insect larvae. May target voltage-gated sodium channel (Nav). The polypeptide is Toxin BmKAEP (Olivierus martensii (Manchurian scorpion)).